Here is a 795-residue protein sequence, read N- to C-terminus: Phenylalanine--tRNA ligase beta subunit (795 aa).

The tRNA-binding domain maps to 39–148 (AGSFHGVVVG…ADAPIGTDIR (110 aa)). Residues 401–476 (PKRATITLRR…RVYGYNNIPD (76 aa)) form the B5 domain. 4 residues coordinate Mg(2+): D454, D460, E463, and E464. The FDX-ACB domain occupies 701–794 (SRFPANRRDI…LKERFQASLR (94 aa)).

This sequence belongs to the phenylalanyl-tRNA synthetase beta subunit family. Type 1 subfamily. In terms of assembly, tetramer of two alpha and two beta subunits. Mg(2+) is required as a cofactor.

It is found in the cytoplasm. The enzyme catalyses tRNA(Phe) + L-phenylalanine + ATP = L-phenylalanyl-tRNA(Phe) + AMP + diphosphate + H(+). The polypeptide is Phenylalanine--tRNA ligase beta subunit (Shigella dysenteriae serotype 1 (strain Sd197)).